The following is a 612-amino-acid chain: Sulfite reductase [NADPH] hemoprotein beta-component (612 aa).

The tract at residues 1–26 (MDDHKPIETPDGPAVDTPGIGARRYE) is disordered. 4 residues coordinate [4Fe-4S] cluster: C469, C475, C514, and C518. Siroheme is bound at residue C518.

The protein belongs to the nitrite and sulfite reductase 4Fe-4S domain family. Alpha(8)-beta(8). The alpha component is a flavoprotein, the beta component is a hemoprotein. Siroheme serves as cofactor. Requires [4Fe-4S] cluster as cofactor.

It carries out the reaction hydrogen sulfide + 3 NADP(+) + 3 H2O = sulfite + 3 NADPH + 4 H(+). The protein operates within sulfur metabolism; hydrogen sulfide biosynthesis; hydrogen sulfide from sulfite (NADPH route): step 1/1. Functionally, component of the sulfite reductase complex that catalyzes the 6-electron reduction of sulfite to sulfide. This is one of several activities required for the biosynthesis of L-cysteine from sulfate. The protein is Sulfite reductase [NADPH] hemoprotein beta-component of Methylorubrum extorquens (strain PA1) (Methylobacterium extorquens).